The primary structure comprises 223 residues: Urease accessory protein UreF (223 aa).

The protein belongs to the UreF family. In terms of assembly, ureD, UreF and UreG form a complex that acts as a GTP-hydrolysis-dependent molecular chaperone, activating the urease apoprotein by helping to assemble the nickel containing metallocenter of UreC. The UreE protein probably delivers the nickel.

The protein localises to the cytoplasm. Functionally, required for maturation of urease via the functional incorporation of the urease nickel metallocenter. This Rhizobium meliloti (strain 1021) (Ensifer meliloti) protein is Urease accessory protein UreF.